A 425-amino-acid chain; its full sequence is Protein CLP1 homolog (425 aa).

ATP is bound by residues Glu18, Lys59, and 121–126; that span reads DVGKST.

It belongs to the Clp1 family. Clp1 subfamily.

It is found in the nucleus. In terms of biological role, required for endonucleolytic cleavage during polyadenylation-dependent pre-mRNA 3'-end formation. The polypeptide is Protein CLP1 homolog (cbc) (Drosophila mojavensis (Fruit fly)).